Here is a 288-residue protein sequence, read N- to C-terminus: 2-methoxy-6-polyprenyl-1,4-benzoquinol methylase, mitochondrial (288 aa).

The transit peptide at 1-27 (MALRSVSRRLGSRILNQRSFVASLHSH) directs the protein to the mitochondrion. S-adenosyl-L-methionine contacts are provided by residues threonine 94, aspartate 130, and 160 to 161 (DA).

It belongs to the class I-like SAM-binding methyltransferase superfamily. MenG/UbiE family. Component of a multi-subunit COQ enzyme complex.

Its subcellular location is the mitochondrion inner membrane. The enzyme catalyses a 2-methoxy-6-(all-trans-polyprenyl)benzene-1,4-diol + S-adenosyl-L-methionine = a 5-methoxy-2-methyl-3-(all-trans-polyprenyl)benzene-1,4-diol + S-adenosyl-L-homocysteine + H(+). Its pathway is cofactor biosynthesis; ubiquinone biosynthesis. In terms of biological role, methyltransferase required for the conversion of 2-polyprenyl-6-methoxy-1,4-benzoquinol (DDMQH2) to 2-polyprenyl-3-methyl-6-methoxy-1,4-benzoquinol (DMQH2). This chain is 2-methoxy-6-polyprenyl-1,4-benzoquinol methylase, mitochondrial, found in Arabidopsis thaliana (Mouse-ear cress).